Here is an 895-residue protein sequence, read N- to C-terminus: Transcription factor SWI6 (895 aa).

Polar residues predominate over residues 1-45; sequence MASTVAGNSFVSQQHPGNLHSANLQSQSQGFRRQNSTSSVPSTAS. Positions 1–107 are disordered; the sequence is MASTVAGNSF…SDQNVPQQPQ (107 aa). Low complexity predominate over residues 64–100; the sequence is MSSQQSQPPASQQSFSMSQTGSQPQPSQSSFRSYSDQ. Residues 112-219 form the HTH APSES-type domain; sequence IYTAVYSNVE…NRNPDGSVSQ (108 aa). The H-T-H motif DNA-binding region spans 143 to 164; it reads ATQILKVAGVEKGKRTKILEKE. 2 disordered regions span residues 272-293 and 323-358; these read ARFD…SFQR and NMAF…NSFG. ANK repeat units follow at residues 458–488 and 607–636; these read QCHT…PFRV and AGDT…SPHI. The segment at 653–684 is disordered; that stretch reads SDGAMKTKGDSGGDVENGDVGGSSQKSNESSN. The segment covering 674 to 684 has biased composition (polar residues); sequence GSSQKSNESSN. A coiled-coil region spans residues 698 to 759; the sequence is SANFQEEIKN…VTNLQRAEER (62 aa).

The protein localises to the nucleus. Functionally, transcription factor that plays a role downstream of the MCK1-MKK2-MPS1 cascade. Required for hyphal morphogenesis and pathogenicity. Is an important oxidative stress response regulator and plays a positive role in the regulation of extracellular peroxidases. The polypeptide is Transcription factor SWI6 (Pyricularia oryzae (strain 70-15 / ATCC MYA-4617 / FGSC 8958) (Rice blast fungus)).